The sequence spans 116 residues: UPF0654 protein C869.09 (116 aa).

Residues 32 to 116 (LKEHGSESHY…LLEEVDDESK (85 aa)) form a disordered region. Residues 39-48 (SHYTTGTTRG) show a composition bias toward polar residues. Over residues 49-64 (QKADADDAGELREEGF) the composition is skewed to basic and acidic residues.

This sequence belongs to the UPF0654 (con-6) family.

Its subcellular location is the cytoplasm. The protein localises to the nucleus. The chain is UPF0654 protein C869.09 from Schizosaccharomyces pombe (strain 972 / ATCC 24843) (Fission yeast).